Reading from the N-terminus, the 110-residue chain is Keratin, type II cytoskeletal 8 (110 aa).

The tract at residues 1-12 is head; sequence MSTSGPRAFSSR. Residues 1-110 form the IF rod domain; sequence MSTSGPRAFS…LDIEIATYRK (110 aa). S2, S4, S10, and S11 each carry phosphoserine. An Omega-N-methylarginine modification is found at R12. The coil 1A stretch occupies residues 13–25; that stretch reads FASFIDKVRWSLL. A linker 1 region spans residues 26 to 39; it reads QQQKSNMDNMFESY. Residue K29 forms a Glycyl lysine isopeptide (Lys-Gly) (interchain with G-Cter in SUMO2) linkage. Residues 40 to 79 are coil 1B; it reads INNLRDVDEAYMNKVELESRLEGLTDEINFLRQIHEEEIR. K53 is subject to N6-acetyllysine. S80 and S85 each carry phosphoserine. A linker 12 region spans residues 80 to 86; the sequence is SLDMDSI. The segment at 87-110 is coil 2; it reads IAEVRHGDDLRRLALDIEIATYRK. The tract at residues 88-99 is necessary for interaction with PNN; the sequence is AEVRHGDDLRRL. K110 participates in a covalent cross-link: Glycyl lysine isopeptide (Lys-Gly) (interchain with G-Cter in SUMO2).

It belongs to the intermediate filament family. In terms of assembly, heterotetramer of two type I and two type II keratins. Forms a heterodimer with KRT18. Associates with KRT20. Interacts with PNN. When associated with KRT19, interacts with DMD. Interacts with TCHP. Interacts with APEX1. Interacts with GPER1. Interacts with EPPK1. Interacts with PKP1 and PKP2. In terms of processing, O-glycosylated. O-GlcNAcylation at multiple sites increases solubility, and decreases stability by inducing proteasomal degradation. O-glycosylated (O-GlcNAcylated), in a cell cycle-dependent manner.

The protein resides in the cytoplasm. It localises to the nucleus. The protein localises to the nucleoplasm. It is found in the nucleus matrix. Functionally, together with KRT19, helps to link the contractile apparatus to dystrophin at the costameres of striated muscle. The sequence is that of Keratin, type II cytoskeletal 8 from Mesocricetus auratus (Golden hamster).